A 61-amino-acid polypeptide reads, in one-letter code: Small ribosomal subunit protein uS14 (61 aa).

C24, C27, C40, and C43 together coordinate Zn(2+).

It belongs to the universal ribosomal protein uS14 family. Zinc-binding uS14 subfamily. In terms of assembly, part of the 30S ribosomal subunit. Contacts proteins S3 and S10. Zn(2+) is required as a cofactor.

In terms of biological role, binds 16S rRNA, required for the assembly of 30S particles and may also be responsible for determining the conformation of the 16S rRNA at the A site. This chain is Small ribosomal subunit protein uS14, found in Helicobacter pylori (strain G27).